The chain runs to 307 residues: Homoserine O-acetyltransferase (307 aa).

The active-site Acyl-thioester intermediate is the Cys142. Lys163 and Ser192 together coordinate substrate. His235 (proton acceptor) is an active-site residue. The active site involves Glu237. Residue Arg249 participates in substrate binding.

It belongs to the MetA family.

It localises to the cytoplasm. It catalyses the reaction L-homoserine + acetyl-CoA = O-acetyl-L-homoserine + CoA. Its pathway is amino-acid biosynthesis; L-methionine biosynthesis via de novo pathway; O-acetyl-L-homoserine from L-homoserine: step 1/1. Transfers an acetyl group from acetyl-CoA to L-homoserine, forming acetyl-L-homoserine. This chain is Homoserine O-acetyltransferase, found in Desulfitobacterium hafniense (strain Y51).